The following is a 140-amino-acid chain: Lymphocyte antigen 6 complex locus protein G5c (140 aa).

Residues 1-41 form the signal peptide; sequence MRFMAGPAGSQNPGPMCFHSSLQALYTVLLIVLVMMSLVFG. Positions 60 to 140 constitute a UPAR/Ly6 domain; that stretch reads LRCYRCLLET…SQCCFLGFLQ (81 aa). Intrachain disulfides connect Cys-62-Cys-89, Cys-65-Cys-74, Cys-81-Cys-107, and Cys-116-Cys-133. The N-linked (GlcNAc...) asparagine glycan is linked to Asn-96.

As to quaternary structure, forms oligomers. Post-translationally, N-glycosylated.

It localises to the secreted. May have a role in hematopoietic cell differentiation. The protein is Lymphocyte antigen 6 complex locus protein G5c (LY6G5C) of Macaca mulatta (Rhesus macaque).